Here is a 90-residue protein sequence, read N- to C-terminus: Probable small nuclear ribonucleoprotein E (90 aa).

In terms of domain architecture, Sm spans 14-89 (VNLIFRYLQN…ITLIHAAAQE (76 aa)).

Belongs to the snRNP Sm proteins family. Core component of the spliceosomal U1, U2, U4 and U5 small nuclear ribonucleoproteins (snRNPs), the building blocks of the spliceosome.

It is found in the nucleus. The protein resides in the cytoplasm. It localises to the cytosol. Its function is as follows. Plays a role in pre-mRNA splicing as a core component of the spliceosomal U1, U2, U4 and U5 small nuclear ribonucleoproteins (snRNPs), the building blocks of the spliceosome. The sequence is that of Probable small nuclear ribonucleoprotein E (snr-6) from Caenorhabditis briggsae.